Consider the following 524-residue polypeptide: Probable cytosol aminopeptidase (524 aa).

Residues lysine 288 and aspartate 293 each contribute to the Mn(2+) site. Lysine 300 is a catalytic residue. Mn(2+) is bound by residues aspartate 311, aspartate 370, and glutamate 372. Arginine 374 is an active-site residue.

This sequence belongs to the peptidase M17 family. The cofactor is Mn(2+).

It localises to the cytoplasm. It catalyses the reaction Release of an N-terminal amino acid, Xaa-|-Yaa-, in which Xaa is preferably Leu, but may be other amino acids including Pro although not Arg or Lys, and Yaa may be Pro. Amino acid amides and methyl esters are also readily hydrolyzed, but rates on arylamides are exceedingly low.. The enzyme catalyses Release of an N-terminal amino acid, preferentially leucine, but not glutamic or aspartic acids.. Its function is as follows. Presumably involved in the processing and regular turnover of intracellular proteins. Catalyzes the removal of unsubstituted N-terminal amino acids from various peptides. The chain is Probable cytosol aminopeptidase (pepA) from Mycobacterium leprae (strain TN).